Here is a 442-residue protein sequence, read N- to C-terminus: Cell division protein FtsA (442 aa).

Positions 401–428 (VTSYDNDSYDAPEETVYDEPEQKKSDED) are disordered. The span at 407–419 (DSYDAPEETVYDE) shows a compositional bias: acidic residues.

This sequence belongs to the FtsA/MreB family. In terms of assembly, self-interacts. Interacts with FtsZ.

It localises to the cell membrane. Functionally, cell division protein that is involved in the assembly of the Z ring. May serve as a membrane anchor for the Z ring. This Enterococcus hirae protein is Cell division protein FtsA.